Reading from the N-terminus, the 118-residue chain is Probable non-functional immunoglobulin lambda variable 1-50 (118 aa).

A signal peptide spans Met1–Ala19. The tract at residues Gln20–Ser44 is framework-1. Residues Gln20–Ala118 enclose the Ig-like domain. An intrachain disulfide couples Cys41 to Cys109. A complementarity-determining-1 region spans residues Ser45–Val53. Residues Val54–Tyr70 are framework-2. The complementarity-determining-2 stretch occupies residues Gly71–Ser73. The interval Asn74–Cys109 is framework-3. Positions Lys110 to Ala118 are complementarity-determining-3.

Immunoglobulins are composed of two identical heavy chains and two identical light chains; disulfide-linked.

Its subcellular location is the secreted. It localises to the cell membrane. Its function is as follows. Probable non-functional open reading frame (ORF) of V region of the variable domain of immunoglobulin light chains. Non-functional ORF generally cannot participate in the synthesis of a productive immunoglobulin chain due to altered V-(D)-J or switch recombination and/or splicing site (at mRNA level) and/or conserved amino acid change (protein level). Immunoglobulins, also known as antibodies, are membrane-bound or secreted glycoproteins produced by B lymphocytes. In the recognition phase of humoral immunity, the membrane-bound immunoglobulins serve as receptors which, upon binding of a specific antigen, trigger the clonal expansion and differentiation of B lymphocytes into immunoglobulins-secreting plasma cells. Secreted immunoglobulins mediate the effector phase of humoral immunity, which results in the elimination of bound antigens. The antigen binding site is formed by the variable domain of one heavy chain, together with that of its associated light chain. Thus, each immunoglobulin has two antigen binding sites with remarkable affinity for a particular antigen. The variable domains are assembled by a process called V-(D)-J rearrangement and can then be subjected to somatic hypermutations which, after exposure to antigen and selection, allow affinity maturation for a particular antigen. The polypeptide is Probable non-functional immunoglobulin lambda variable 1-50 (Homo sapiens (Human)).